The sequence spans 397 residues: Transaldolase (397 aa).

The active-site Schiff-base intermediate with substrate is the lysine 136.

It belongs to the transaldolase family. Type 1 subfamily. Homodimer.

Its subcellular location is the cytoplasm. The catalysed reaction is D-sedoheptulose 7-phosphate + D-glyceraldehyde 3-phosphate = D-erythrose 4-phosphate + beta-D-fructose 6-phosphate. It functions in the pathway carbohydrate degradation; pentose phosphate pathway; D-glyceraldehyde 3-phosphate and beta-D-fructose 6-phosphate from D-ribose 5-phosphate and D-xylulose 5-phosphate (non-oxidative stage): step 2/3. Transaldolase is important for the balance of metabolites in the pentose-phosphate pathway. The protein is Transaldolase of Synechococcus sp. (strain ATCC 27144 / PCC 6301 / SAUG 1402/1) (Anacystis nidulans).